Consider the following 291-residue polypeptide: ATP synthase gamma chain (291 aa).

The protein belongs to the ATPase gamma chain family. As to quaternary structure, F-type ATPases have 2 components, CF(1) - the catalytic core - and CF(0) - the membrane proton channel. CF(1) has five subunits: alpha(3), beta(3), gamma(1), delta(1), epsilon(1). CF(0) has three main subunits: a, b and c.

It is found in the cell membrane. In terms of biological role, produces ATP from ADP in the presence of a proton gradient across the membrane. The gamma chain is believed to be important in regulating ATPase activity and the flow of protons through the CF(0) complex. This Streptococcus equinus (Streptococcus bovis) protein is ATP synthase gamma chain.